We begin with the raw amino-acid sequence, 404 residues long: MKLPIYLDYSATTPVDPRVAQKMSECLLMDGNFGNPASRSHVFGWKAEEAVENARRQVAELVNADPREIVWTSGATESDNLAIKGVAHFYSGKGKHIITSKIEHKAVLDTCRQLEREGFEVTYLEPGEDGLITPALVEAALRDDTILVSVMHVNNEIGTVNDIAAIGELTRSRGVLFHVDAAQSTGKVEIDLDKLKVDLMSFSAHKTYGPKGIGALYVRRKPRVRIEGQMHGGGHERGMRSGTLATHQIVGMGEAFRIAKEEMAQENARVLALRDRFFAQIDGLEELYINGSMTSRVPHNLNVSFNYVEGESLIMALKDLAVSSGSACTSASLEPSYVLRALGRNDELAHSSIRFTFGRFTTEEEIDYAAKKVVEAVSKLRELSPLWDMYKEGVDLSQVEWQAH.

Pyridoxal 5'-phosphate is bound by residues 75–76, asparagine 155, glutamine 183, and 203–205; these read AT and SAH. Lysine 206 carries the post-translational modification N6-(pyridoxal phosphate)lysine. Threonine 243 contacts pyridoxal 5'-phosphate. Cysteine 328 acts as the Cysteine persulfide intermediate in catalysis. Residue cysteine 328 participates in [2Fe-2S] cluster binding.

The protein belongs to the class-V pyridoxal-phosphate-dependent aminotransferase family. NifS/IscS subfamily. Homodimer. Forms a heterotetramer with IscU, interacts with other sulfur acceptors. Requires pyridoxal 5'-phosphate as cofactor.

The protein localises to the cytoplasm. It carries out the reaction (sulfur carrier)-H + L-cysteine = (sulfur carrier)-SH + L-alanine. Its pathway is cofactor biosynthesis; iron-sulfur cluster biosynthesis. In terms of biological role, master enzyme that delivers sulfur to a number of partners involved in Fe-S cluster assembly, tRNA modification or cofactor biosynthesis. Catalyzes the removal of elemental sulfur atoms from cysteine to produce alanine. Functions as a sulfur delivery protein for Fe-S cluster synthesis onto IscU, an Fe-S scaffold assembly protein, as well as other S acceptor proteins. This chain is Cysteine desulfurase IscS, found in Pseudomonas aeruginosa (strain UCBPP-PA14).